The following is a 3259-amino-acid chain: Golgin subfamily B member 1 (3259 aa).

At methionine 1 the chain carries N-acetylmethionine. Topologically, residues 1-3235 are cytoplasmic; it reads MLSRLSGLAN…LRSLCHSRTR (3235 aa). A phosphoserine mark is found at serine 6, serine 17, serine 138, and serine 528. Residues 48–593 adopt a coiled-coil conformation; sequence EDVQERLAYA…RAEEADHEVL (546 aa). A disordered region spans residues 119-142; it reads GTVLPTEPQSEEQLSKHDKSSTEE. Over residues 131 to 142 the composition is skewed to basic and acidic residues; it reads QLSKHDKSSTEE. The interval 624-652 is disordered; sequence LMPNEESSLPAVEKEQASTEHQSRTSEEI. Positions 635-650 are enriched in basic and acidic residues; the sequence is VEKEQASTEHQSRTSE. Residue serine 653 is modified to Phosphoserine. 3 coiled-coil regions span residues 677-1028, 1062-1245, and 1301-1779; these read DIGQ…KEIP, LKQT…ESID, and GTSV…TEKH. The tract at residues 944–963 is disordered; that stretch reads AKKEQVEEDNEVSSGLKQNY. A compositionally biased stretch (basic and acidic residues) spans 1747–1763; it reads SEKDSLSEEVQDLKHQI. Positions 1747 to 1829 are disordered; that stretch reads SEKDSLSEEV…SANPAVSKDF (83 aa). Polar residues-rich tracts occupy residues 1782-1794 and 1802-1820; these read QTNVTEEGTQSIP and SLSMSTRPTCSESVPSAKS. A coiled-coil region spans residues 1828 to 3185; the sequence is DFSSHDEINN…EQIRRLEHSE (1358 aa). 4 positions are modified to phosphoserine: serine 2216, serine 2735, serine 2872, and serine 2884. The interval 2856–2876 is disordered; that stretch reads RKSEEGKQRSAAQPSTSPAEV. Polar residues predominate over residues 2865-2875; that stretch reads SAAQPSTSPAE. Residues 2998 to 3021 are disordered; that stretch reads TQPLKVQYQRQASPETSASPDGSQ. Serine 3037 is subject to Phosphoserine. The disordered stretch occupies residues 3107–3140; sequence IDVAPGAPQEKNGVHRKSDPEELREPQQSFSEAQ. Over residues 3118-3131 the composition is skewed to basic and acidic residues; the sequence is NGVHRKSDPEELRE. The chain crosses the membrane as a helical span at residues 3236 to 3256; it reads VPLLAAIYFLMIHVLLILCFT. The Lumenal portion of the chain corresponds to 3257-3259; it reads GHL.

Homodimer; disulfide-linked. Interacts with PLK3.

It is found in the golgi apparatus membrane. Its function is as follows. May participate in forming intercisternal cross-bridges of the Golgi complex. The chain is Golgin subfamily B member 1 (GOLGB1) from Homo sapiens (Human).